Reading from the N-terminus, the 450-residue chain is 23S rRNA (uracil(1939)-C(5))-methyltransferase RlmD (450 aa).

A TRAM domain is found at 12–70 (SKQLSAKLSLNVDQLDHLGAGIAQYQGKVVFIPGALPDETVTVQLTEQKKNYARAKLIK). C83, C89, C92, and C171 together coordinate [4Fe-4S] cluster. Positions 283, 312, 317, 333, 360, and 380 each coordinate S-adenosyl-L-methionine. C406 acts as the Nucleophile in catalysis.

It belongs to the class I-like SAM-binding methyltransferase superfamily. RNA M5U methyltransferase family. RlmD subfamily.

It catalyses the reaction uridine(1939) in 23S rRNA + S-adenosyl-L-methionine = 5-methyluridine(1939) in 23S rRNA + S-adenosyl-L-homocysteine + H(+). Functionally, catalyzes the formation of 5-methyl-uridine at position 1939 (m5U1939) in 23S rRNA. The chain is 23S rRNA (uracil(1939)-C(5))-methyltransferase RlmD from Shewanella sp. (strain W3-18-1).